The following is a 55-amino-acid chain: Cortexin domain containing 2 (55 aa).

The helical transmembrane segment at 16 to 36 threads the bilayer; that stretch reads FAIAFVVLLFLFLIVMIFRCA.

It localises to the membrane. This is Cortexin domain containing 2 from Homo sapiens (Human).